We begin with the raw amino-acid sequence, 250 residues long: Putative inner dynein arm light chain, axonemal (250 aa).

Positions 168–250 form a coiled coil; sequence MRKALQAHEE…QLEGITAPKK (83 aa).

Belongs to the inner dynein arm light chain family.

The protein localises to the cell projection. Its subcellular location is the cilium. It localises to the dynein axonemal particle. Functionally, may play a dynamic role in flagellar motility. This chain is Putative inner dynein arm light chain, axonemal, found in Drosophila melanogaster (Fruit fly).